The chain runs to 328 residues: 5,10-methylenetetrahydromethanopterin reductase (328 aa).

Belongs to the mer family.

The protein localises to the cytoplasm. The enzyme catalyses 5-methyl-5,6,7,8-tetrahydromethanopterin + oxidized coenzyme F420-(gamma-L-Glu)(n) + H(+) = 5,10-methylenetetrahydromethanopterin + reduced coenzyme F420-(gamma-L-Glu)(n). It functions in the pathway one-carbon metabolism; methanogenesis from CO(2); methyl-coenzyme M from 5,10-methylene-5,6,7,8-tetrahydromethanopterin: step 1/2. In terms of biological role, catalyzes the reversible reduction of methylene-H(4)MPT to methyl-H(4)MPT. The protein is 5,10-methylenetetrahydromethanopterin reductase of Methanosarcina barkeri (strain Fusaro / DSM 804).